The following is a 951-amino-acid chain: Valine--tRNA ligase (951 aa).

The 'HIGH' region signature appears at P42–H52. A 'KMSKS' region motif is present at residues K554–S558. Residue K557 participates in ATP binding. Residues A880–Q944 adopt a coiled-coil conformation.

This sequence belongs to the class-I aminoacyl-tRNA synthetase family. ValS type 1 subfamily. As to quaternary structure, monomer.

The protein resides in the cytoplasm. The catalysed reaction is tRNA(Val) + L-valine + ATP = L-valyl-tRNA(Val) + AMP + diphosphate. In terms of biological role, catalyzes the attachment of valine to tRNA(Val). As ValRS can inadvertently accommodate and process structurally similar amino acids such as threonine, to avoid such errors, it has a 'posttransfer' editing activity that hydrolyzes mischarged Thr-tRNA(Val) in a tRNA-dependent manner. In Shigella dysenteriae serotype 1 (strain Sd197), this protein is Valine--tRNA ligase.